A 225-amino-acid chain; its full sequence is Claudin-17 (225 aa).

Residues 1–7 (MAFYPLQ) lie on the Cytoplasmic side of the membrane. A helical membrane pass occupies residues 8–28 (IAGLVLGFLGMVGTLATTLLP). Residues 29-81 (QWRVSAFIGSNIIVFERIWEGLWMNCVRQAKARLQCKFYSSMLALSPALEAAR) are Extracellular-facing. The helical transmembrane segment at 82-102 (ALMCVAVALSLIALIIGICGM) threads the bilayer. Topologically, residues 103 to 124 (KKIQCTGSNERAKAYLLGTSGV) are cytoplasmic. Residues 125 to 145 (LFILTGIFVLIPVCWTANIII) traverse the membrane as a helical segment. The Extracellular segment spans residues 146-164 (RDFYNPAVHVGQKRELGAA). A helical membrane pass occupies residues 165 to 185 (LFLGWASVAVLFIAGGLLCGF). Residues 186-225 (CCCNRKKQRDGYPAPRPSMPRTDERRRNMTRQSETPTSYV) are Cytoplasmic-facing. The interval 194–225 (RDGYPAPRPSMPRTDERRRNMTRQSETPTSYV) is disordered. Residues 215 to 225 (TRQSETPTSYV) are compositionally biased toward polar residues.

It belongs to the claudin family. Does not form homotypic polymeric strands and it is not sufficient to form tight junctions by its own. Interacts with OCLN.

Its subcellular location is the cell junction. It is found in the tight junction. The protein resides in the cell membrane. It catalyses the reaction chloride(in) = chloride(out). The enzyme catalyses hydrogencarbonate(in) = hydrogencarbonate(out). The catalysed reaction is bromide(in) = bromide(out). It carries out the reaction iodide(out) = iodide(in). It catalyses the reaction fluoride(in) = fluoride(out). The enzyme catalyses nitrate(in) = nitrate(out). The catalysed reaction is thiocyanate(in) = thiocyanate(out). In terms of biological role, channel-forming tight junction protein with selectivity for anions, including chloride and hydrogencarbonate, and for solutes smaller than 9 Angstrom in diameter. In the kidney proximal tubule, may be involved in quantitative reabsorption of filtered anions. Does not affect water permeability. This Sus scrofa (Pig) protein is Claudin-17 (CLDN17).